A 281-amino-acid chain; its full sequence is 3-methyl-2-oxobutanoate hydroxymethyltransferase (281 aa).

Residues 1-20 form a disordered region; sequence MSEQTIYGANTPGGSGPRTK. The Mg(2+) site is built by Asp62 and Asp101. Residues 62-63, Asp101, and Lys131 contribute to the 3-methyl-2-oxobutanoate site; that span reads DS. Position 133 (Glu133) interacts with Mg(2+). Glu199 serves as the catalytic Proton acceptor.

The protein belongs to the PanB family. Homodecamer; pentamer of dimers. Requires Mg(2+) as cofactor.

The protein resides in the cytoplasm. It catalyses the reaction 3-methyl-2-oxobutanoate + (6R)-5,10-methylene-5,6,7,8-tetrahydrofolate + H2O = 2-dehydropantoate + (6S)-5,6,7,8-tetrahydrofolate. Its pathway is cofactor biosynthesis; (R)-pantothenate biosynthesis; (R)-pantoate from 3-methyl-2-oxobutanoate: step 1/2. Its function is as follows. Catalyzes the reversible reaction in which hydroxymethyl group from 5,10-methylenetetrahydrofolate is transferred onto alpha-ketoisovalerate to form ketopantoate. This is 3-methyl-2-oxobutanoate hydroxymethyltransferase from Mycobacterium bovis (strain ATCC BAA-935 / AF2122/97).